Reading from the N-terminus, the 197-residue chain is Nucleoside triphosphate pyrophosphatase (197 aa).

D70 serves as the catalytic Proton acceptor.

It belongs to the Maf family. A divalent metal cation is required as a cofactor.

It localises to the cytoplasm. The catalysed reaction is a ribonucleoside 5'-triphosphate + H2O = a ribonucleoside 5'-phosphate + diphosphate + H(+). It carries out the reaction a 2'-deoxyribonucleoside 5'-triphosphate + H2O = a 2'-deoxyribonucleoside 5'-phosphate + diphosphate + H(+). Its function is as follows. Nucleoside triphosphate pyrophosphatase. May have a dual role in cell division arrest and in preventing the incorporation of modified nucleotides into cellular nucleic acids. This is Nucleoside triphosphate pyrophosphatase (yhdE) from Shigella flexneri.